We begin with the raw amino-acid sequence, 525 residues long: NAD(P)H-quinone oxidoreductase chain 4-2 (525 aa).

14 helical membrane-spanning segments follow: residues Phe-6–Ile-26, Trp-36–Ser-56, Leu-91–Leu-111, Leu-115–Asp-135, Leu-137–Trp-157, Phe-169–Phe-189, Leu-212–His-232, Thr-243–Ile-263, Phe-277–Phe-297, Met-314–Leu-334, Gln-335–Asp-355, Ile-375–Ala-397, Val-417–Met-437, and Val-464–Leu-484.

The protein belongs to the complex I subunit 4 family.

Its subcellular location is the cellular thylakoid membrane. It carries out the reaction a plastoquinone + NADH + (n+1) H(+)(in) = a plastoquinol + NAD(+) + n H(+)(out). It catalyses the reaction a plastoquinone + NADPH + (n+1) H(+)(in) = a plastoquinol + NADP(+) + n H(+)(out). NDH-1 shuttles electrons from NAD(P)H, via FMN and iron-sulfur (Fe-S) centers, to quinones in the respiratory chain. The immediate electron acceptor for the enzyme in this species is believed to be plastoquinone. Couples the redox reaction to proton translocation (for every two electrons transferred, four hydrogen ions are translocated across the cytoplasmic membrane), and thus conserves the redox energy in a proton gradient. The chain is NAD(P)H-quinone oxidoreductase chain 4-2 (ndhD2) from Nostoc sp. (strain PCC 7120 / SAG 25.82 / UTEX 2576).